Here is a 566-residue protein sequence, read N- to C-terminus: Proline--tRNA ligase (566 aa).

Belongs to the class-II aminoacyl-tRNA synthetase family. ProS type 1 subfamily. In terms of assembly, homodimer.

It localises to the cytoplasm. It catalyses the reaction tRNA(Pro) + L-proline + ATP = L-prolyl-tRNA(Pro) + AMP + diphosphate. Catalyzes the attachment of proline to tRNA(Pro) in a two-step reaction: proline is first activated by ATP to form Pro-AMP and then transferred to the acceptor end of tRNA(Pro). As ProRS can inadvertently accommodate and process non-cognate amino acids such as alanine and cysteine, to avoid such errors it has two additional distinct editing activities against alanine. One activity is designated as 'pretransfer' editing and involves the tRNA(Pro)-independent hydrolysis of activated Ala-AMP. The other activity is designated 'posttransfer' editing and involves deacylation of mischarged Ala-tRNA(Pro). The misacylated Cys-tRNA(Pro) is not edited by ProRS. This Staphylococcus saprophyticus subsp. saprophyticus (strain ATCC 15305 / DSM 20229 / NCIMB 8711 / NCTC 7292 / S-41) protein is Proline--tRNA ligase.